The following is a 171-amino-acid chain: ATP synthase subunit b (171 aa).

Residues 12-34 (FALNLNLFETNVINLAVVAFGLY) form a helical membrane-spanning segment.

This sequence belongs to the ATPase B chain family. F-type ATPases have 2 components, F(1) - the catalytic core - and F(0) - the membrane proton channel. F(1) has five subunits: alpha(3), beta(3), gamma(1), delta(1), epsilon(1). F(0) has four main subunits: a(1), b(1), b'(1) and c(10-14). The alpha and beta chains form an alternating ring which encloses part of the gamma chain. F(1) is attached to F(0) by a central stalk formed by the gamma and epsilon chains, while a peripheral stalk is formed by the delta, b and b' chains.

Its subcellular location is the cellular thylakoid membrane. F(1)F(0) ATP synthase produces ATP from ADP in the presence of a proton or sodium gradient. F-type ATPases consist of two structural domains, F(1) containing the extramembraneous catalytic core and F(0) containing the membrane proton channel, linked together by a central stalk and a peripheral stalk. During catalysis, ATP synthesis in the catalytic domain of F(1) is coupled via a rotary mechanism of the central stalk subunits to proton translocation. Functionally, component of the F(0) channel, it forms part of the peripheral stalk, linking F(1) to F(0). This is ATP synthase subunit b from Prochlorococcus marinus (strain SARG / CCMP1375 / SS120).